A 405-amino-acid polypeptide reads, in one-letter code: Accessory Sec system protein translocase subunit SecY2 (405 aa).

10 helical membrane passes run 14-34 (LFTL…LPFV), 63-83 (LSIF…WQMF), 104-124 (MYLT…RLPV), 131-151 (ILVV…LVWL), 156-176 (ASMG…LNIP), 191-211 (GIIV…ALMY), 247-267 (MYVM…GFIF), 285-305 (PLWV…FAFV), 343-363 (FSVI…LFVL), and 368-388 (LLRL…IFTI).

It belongs to the SecY/SEC61-alpha family. SecY2 subfamily. In terms of assembly, component of the accessory SecA2/SecY2 protein translocase complex required to export cell wall proteins. May form heterotrimers with SecE and SecG subunits.

Its subcellular location is the cell membrane. Its function is as follows. Part of the accessory SecA2/SecY2 system specifically required for export of possible cell wall proteins. The central subunit of a protein translocation channel. The chain is Accessory Sec system protein translocase subunit SecY2 from Streptococcus pneumoniae (strain CGSP14).